The chain runs to 413 residues: Serine hydroxymethyltransferase (413 aa).

Residues Leu119 and 123 to 125 (GHL) contribute to the (6S)-5,6,7,8-tetrahydrofolate site. Position 228 is an N6-(pyridoxal phosphate)lysine (Lys228). Glu243 contributes to the (6S)-5,6,7,8-tetrahydrofolate binding site.

The protein belongs to the SHMT family. Homodimer. Pyridoxal 5'-phosphate serves as cofactor.

It is found in the cytoplasm. The catalysed reaction is (6R)-5,10-methylene-5,6,7,8-tetrahydrofolate + glycine + H2O = (6S)-5,6,7,8-tetrahydrofolate + L-serine. It participates in one-carbon metabolism; tetrahydrofolate interconversion. The protein operates within amino-acid biosynthesis; glycine biosynthesis; glycine from L-serine: step 1/1. Its function is as follows. Catalyzes the reversible interconversion of serine and glycine with tetrahydrofolate (THF) serving as the one-carbon carrier. This reaction serves as the major source of one-carbon groups required for the biosynthesis of purines, thymidylate, methionine, and other important biomolecules. Also exhibits THF-independent aldolase activity toward beta-hydroxyamino acids, producing glycine and aldehydes, via a retro-aldol mechanism. This Desulforamulus reducens (strain ATCC BAA-1160 / DSM 100696 / MI-1) (Desulfotomaculum reducens) protein is Serine hydroxymethyltransferase.